The following is a 137-amino-acid chain: MRTLGVDLGRVRIGLAVADEILRTARAVTTVVRRTEAEDLSAIAEVARDYEVTRAVVGLPLNMDGTEGPSARLARGFAPRLEAALGVPVELFDERLSSFEAESRLRARGLSAREQRGQVDAEAAAVILQGWLDRRAP.

The protein belongs to the YqgF nuclease family.

The protein resides in the cytoplasm. In terms of biological role, could be a nuclease involved in processing of the 5'-end of pre-16S rRNA. This chain is Putative pre-16S rRNA nuclease, found in Anaeromyxobacter sp. (strain K).